Reading from the N-terminus, the 147-residue chain is Formiminotransferase N-terminal subdomain-containing protein (147 aa).

Residues 1 to 20 (MSSSRVGLRLAACLLNVSEA) form the signal peptide.

The protein belongs to the formiminotransferase family. Widely expressed with highest levels in liver and skeletal muscle, and moderate levels in kidney, bone and pancreas.

This Homo sapiens (Human) protein is Formiminotransferase N-terminal subdomain-containing protein (FTCDNL1).